A 470-amino-acid polypeptide reads, in one-letter code: ADAM DEC1 (470 aa).

An N-terminal signal peptide occupies residues 1 to 30; it reads MLRGISQLPAVATMSWVLLPVLWLIVQTQA. Positions 31 to 205 are excised as a propeptide; it reads IAIKQTPELT…QGPIRISRSL (175 aa). Asparagine 61 is a glycosylation site (N-linked (GlcNAc...) asparagine). The segment at 173–200 is disordered; sequence FTSNQEEQDPANHTCGVKSTDGKQGPIR. Asparagine 184 carries N-linked (GlcNAc...) (complex) asparagine glycosylation. In terms of domain architecture, Peptidase M12B spans 218-412; it reads KYIDLYLVLD…QKPKCLLQAP (195 aa). Asparagine 237 carries N-linked (GlcNAc...) asparagine glycosylation. Cystine bridges form between cysteine 328–cysteine 407 and cysteine 369–cysteine 374. Zn(2+) is bound at residue histidine 352. Residue glutamate 353 is part of the active site. 2 residues coordinate Zn(2+): histidine 356 and aspartate 362. One can recognise a Disintegrin domain in the interval 420–470; sequence TPVCGNHLLEVGEDCDCGSPKECTNLCCEALTCKLKPGTDCGGDAPNHTTE. Asparagine 466 carries N-linked (GlcNAc...) asparagine glycosylation.

Zn(2+) is required as a cofactor. In terms of tissue distribution, expressed highly in the small intestine and appendix, moderately in lymph node, mucosal lining of the colon, thymus, spleen and very weakly in the bone marrow. Predominantly expressed in dendritic cells (DC) of the germinal center. Weakly expressed in monocyte and highly expressed in macrophage. Absent in immature DC.

The protein resides in the secreted. Its function is as follows. May play an important role in the control of the immune response and during pregnancy. The sequence is that of ADAM DEC1 (ADAMDEC1) from Homo sapiens (Human).